A 270-amino-acid chain; its full sequence is Homeobox protein pal-1 (270 aa).

Disordered stretches follow at residues Met-1 to Pro-24, Val-96 to Ala-130, and Leu-175 to Val-201. 2 stretches are compositionally biased toward low complexity: residues Ser-14–Pro-24 and Ser-101–Ala-130. The homeobox DNA-binding region spans Ala-206 to Lys-265.

It belongs to the Caudal homeobox family. In terms of assembly, interacts with tir-1 and let-756. Blastomeres. Embryo. Oocytes.

The protein localises to the nucleus. It is found in the chromosome. It localises to the centromere. Its subcellular location is the kinetochore. Its function is as follows. Transcriptional activator. Interacts with promoter regions for tbx-8.9, tbx-9, elt-1, hnd-1, scrt-1, and vab-7 genes. Binds the sequence ATTTATGAC. Binds to the enhancer region of the hlh-1 gene promoter during embryonic body wall muscle development. Activates the gene for mab-5 in embryo development. Necessary for vab-7 expression in C blastomeres in the posterior of embryos. Required for posterior V6 neuroectoblast cell fate specification during postembryonic neurogenesis (patterning) which generates the characteristic ray lineage during male tail development. Binds to ced-3 promoter and activated expression which is crucial for tail-spike cell death. Has a role in E cell specification in endoderm development and body wall muscle development. This Caenorhabditis elegans protein is Homeobox protein pal-1 (pal-1).